A 328-amino-acid polypeptide reads, in one-letter code: Malate dehydrogenase (328 aa).

11-17 (GAAGQIG) contributes to the NAD(+) binding site. The substrate site is built by arginine 94 and arginine 100. Residues asparagine 107, glutamine 114, and 131–133 (VGN) contribute to the NAD(+) site. 2 residues coordinate substrate: asparagine 133 and arginine 164. Histidine 189 (proton acceptor) is an active-site residue.

This sequence belongs to the LDH/MDH superfamily. MDH type 2 family.

It catalyses the reaction (S)-malate + NAD(+) = oxaloacetate + NADH + H(+). Functionally, catalyzes the reversible oxidation of malate to oxaloacetate. This is Malate dehydrogenase from Xanthomonas campestris pv. campestris (strain 8004).